Here is a 202-residue protein sequence, read N- to C-terminus: Holliday junction resolvase RecU (202 aa).

Mg(2+) is bound by residues threonine 85, aspartate 87, glutamate 100, and glutamine 119.

The protein belongs to the RecU family. Requires Mg(2+) as cofactor.

It localises to the cytoplasm. It carries out the reaction Endonucleolytic cleavage at a junction such as a reciprocal single-stranded crossover between two homologous DNA duplexes (Holliday junction).. Endonuclease that resolves Holliday junction intermediates in genetic recombination. Cleaves mobile four-strand junctions by introducing symmetrical nicks in paired strands. Promotes annealing of linear ssDNA with homologous dsDNA. Required for DNA repair, homologous recombination and chromosome segregation. This is Holliday junction resolvase RecU from Streptococcus equi subsp. equi (strain 4047).